A 258-amino-acid polypeptide reads, in one-letter code: Imidazole glycerol phosphate synthase subunit HisF (258 aa).

Residues aspartate 11 and aspartate 130 contribute to the active site.

Belongs to the HisA/HisF family. As to quaternary structure, heterodimer of HisH and HisF.

The protein localises to the cytoplasm. It carries out the reaction 5-[(5-phospho-1-deoxy-D-ribulos-1-ylimino)methylamino]-1-(5-phospho-beta-D-ribosyl)imidazole-4-carboxamide + L-glutamine = D-erythro-1-(imidazol-4-yl)glycerol 3-phosphate + 5-amino-1-(5-phospho-beta-D-ribosyl)imidazole-4-carboxamide + L-glutamate + H(+). Its pathway is amino-acid biosynthesis; L-histidine biosynthesis; L-histidine from 5-phospho-alpha-D-ribose 1-diphosphate: step 5/9. IGPS catalyzes the conversion of PRFAR and glutamine to IGP, AICAR and glutamate. The HisF subunit catalyzes the cyclization activity that produces IGP and AICAR from PRFAR using the ammonia provided by the HisH subunit. This is Imidazole glycerol phosphate synthase subunit HisF from Escherichia coli (strain ATCC 8739 / DSM 1576 / NBRC 3972 / NCIMB 8545 / WDCM 00012 / Crooks).